We begin with the raw amino-acid sequence, 219 residues long: Ribose-5-phosphate isomerase A (219 aa).

Residues 28 to 31 (TGST), 81 to 84 (DGAD), and 94 to 97 (KGGG) contribute to the substrate site. Glutamate 103 serves as the catalytic Proton acceptor. Lysine 121 contributes to the substrate binding site.

The protein belongs to the ribose 5-phosphate isomerase family. As to quaternary structure, homodimer.

The enzyme catalyses aldehydo-D-ribose 5-phosphate = D-ribulose 5-phosphate. It participates in carbohydrate degradation; pentose phosphate pathway; D-ribose 5-phosphate from D-ribulose 5-phosphate (non-oxidative stage): step 1/1. In terms of biological role, catalyzes the reversible conversion of ribose-5-phosphate to ribulose 5-phosphate. The sequence is that of Ribose-5-phosphate isomerase A from Methylibium petroleiphilum (strain ATCC BAA-1232 / LMG 22953 / PM1).